Consider the following 129-residue polypeptide: Large ribosomal subunit protein bL17 (129 aa).

The protein belongs to the bacterial ribosomal protein bL17 family. Part of the 50S ribosomal subunit. Contacts protein L32.

This Hahella chejuensis (strain KCTC 2396) protein is Large ribosomal subunit protein bL17.